We begin with the raw amino-acid sequence, 330 residues long: MADNSATRVRVPSDRNSRRKIKGEVDIISSLPDVILQHILFSFQTKYAIRTSVLSKRWRHEADAINKALSQYTAPKMMNFHLKINKNNSLHHIKKWTEFAMSRNVENMSLDVRFRSNKIPRFYEINSSVKSLSHRLDLHDVIPRHGVSWTSLKKFSLSYCGLPDESAKILSGCPILEWPMQIVAPQIHCLKLRNTQLPCTLVDVSSLTEAEVLDIIIFPVNLSYNADFLHATMLEMLKKLKNVEKLTFSGSYLQNLSVAEKRGVPFPMFKVKALTLEMKHFVISDIERMLQSSPNLKKLTVRAKDNTGKYLYRYFARLESGSMLELKKGV.

The 48-residue stretch at 25 to 72 (VDIISSLPDVILQHILFSFQTKYAIRTSVLSKRWRHEADAINKALSQY) folds into the F-box domain.

This Arabidopsis thaliana (Mouse-ear cress) protein is Putative F-box protein At1g57690.